Consider the following 443-residue polypeptide: Tol-Pal system protein TolB (443 aa).

Positions 1 to 31 are cleaved as a signal peptide; sequence MMIMTTRTFFSWFIVICAFWLTSFSSVPVHA. Residues 422-443 form a disordered region; sequence ERQLPTPNDASDPAWSPLLNIQ.

The protein belongs to the TolB family. The Tol-Pal system is composed of five core proteins: the inner membrane proteins TolA, TolQ and TolR, the periplasmic protein TolB and the outer membrane protein Pal. They form a network linking the inner and outer membranes and the peptidoglycan layer.

It is found in the periplasm. Part of the Tol-Pal system, which plays a role in outer membrane invagination during cell division and is important for maintaining outer membrane integrity. This is Tol-Pal system protein TolB from Bartonella henselae (strain ATCC 49882 / DSM 28221 / CCUG 30454 / Houston 1) (Rochalimaea henselae).